A 450-amino-acid polypeptide reads, in one-letter code: Tubulin alpha-2 chain (450 aa).

Residue Gln11 participates in GTP binding. Residue Lys40 is modified to N6-acetyllysine. 6 residues coordinate GTP: Glu71, Gly144, Thr145, Thr179, Asn206, and Asn228. Glu71 contacts Mg(2+). Glu254 is a catalytic residue.

It belongs to the tubulin family. Dimer of alpha and beta chains. A typical microtubule is a hollow water-filled tube with an outer diameter of 25 nm and an inner diameter of 15 nM. Alpha-beta heterodimers associate head-to-tail to form protofilaments running lengthwise along the microtubule wall with the beta-tubulin subunit facing the microtubule plus end conferring a structural polarity. Microtubules usually have 13 protofilaments but different protofilament numbers can be found in some organisms and specialized cells. It depends on Mg(2+) as a cofactor. In terms of processing, undergoes a tyrosination/detyrosination cycle, the cyclic removal and re-addition of a C-terminal tyrosine residue by the enzymes tubulin tyrosine carboxypeptidase (TTCP) and tubulin tyrosine ligase (TTL), respectively. Post-translationally, acetylation of alpha chains at Lys-40 stabilizes microtubules and affects affinity and processivity of microtubule motors. This modification has a role in multiple cellular functions, ranging from cell motility, cell cycle progression or cell differentiation to intracellular trafficking and signaling.

The protein localises to the cytoplasm. It localises to the cytoskeleton. The catalysed reaction is GTP + H2O = GDP + phosphate + H(+). Tubulin is the major constituent of microtubules, a cylinder consisting of laterally associated linear protofilaments composed of alpha- and beta-tubulin heterodimers. Microtubules grow by the addition of GTP-tubulin dimers to the microtubule end, where a stabilizing cap forms. Below the cap, tubulin dimers are in GDP-bound state, owing to GTPase activity of alpha-tubulin. The polypeptide is Tubulin alpha-2 chain (Gossypium hirsutum (Upland cotton)).